Reading from the N-terminus, the 124-residue chain is Small ribosomal subunit protein bS16 (124 aa).

Basic and acidic residues predominate over residues 84 to 110 (EKAERKNLKKGEPGKAAKERAEKRAAR). The segment at 84–124 (EKAERKNLKKGEPGKAAKERAEKRAAREAAANAPAEEAASE) is disordered. The segment covering 111–124 (EAAANAPAEEAASE) has biased composition (low complexity).

The protein belongs to the bacterial ribosomal protein bS16 family.

This Paracoccus denitrificans (strain Pd 1222) protein is Small ribosomal subunit protein bS16.